The primary structure comprises 479 residues: Chromosomal replication initiator protein DnaA (479 aa).

A domain I, interacts with DnaA modulators region spans residues 1–71; the sequence is MNLTQIWKAT…RNALARVVGY (71 aa). A domain II region spans residues 71 to 138; that stretch reads YPVQVQVLIA…LDLASAMRSG (68 aa). The segment covering 86–99 has biased composition (polar residues); sequence TEPSPSLTLSNGSR. Residues 86-106 form a disordered region; sequence TEPSPSLTLSNGSRLMSDPEP. Residues 139–355 form a domain III, AAA+ region region; sequence MLNPRYTFSS…GSLNRVAAYA (217 aa). Residues G183, G185, K186, and T187 each coordinate ATP. The segment at 356 to 479 is domain IV, binds dsDNA; sequence ELNRAPITIE…IRERIQMLRG (124 aa).

It belongs to the DnaA family. Oligomerizes as a right-handed, spiral filament on DNA at oriC.

It is found in the cytoplasm. In terms of biological role, plays an essential role in the initiation and regulation of chromosomal replication. ATP-DnaA binds to the origin of replication (oriC) to initiate formation of the DNA replication initiation complex once per cell cycle. Binds the DnaA box (a 9 base pair repeat at the origin) and separates the double-stranded (ds)DNA. Forms a right-handed helical filament on oriC DNA; dsDNA binds to the exterior of the filament while single-stranded (ss)DNA is stabiized in the filament's interior. The ATP-DnaA-oriC complex binds and stabilizes one strand of the AT-rich DNA unwinding element (DUE), permitting loading of DNA polymerase. After initiation quickly degrades to an ADP-DnaA complex that is not apt for DNA replication. Binds acidic phospholipids. The sequence is that of Chromosomal replication initiator protein DnaA from Chloroflexus aurantiacus (strain ATCC 29366 / DSM 635 / J-10-fl).